An 82-amino-acid chain; its full sequence is Small ribosomal subunit protein bS16 (82 aa).

It belongs to the bacterial ribosomal protein bS16 family.

The polypeptide is Small ribosomal subunit protein bS16 (Deinococcus deserti (strain DSM 17065 / CIP 109153 / LMG 22923 / VCD115)).